The chain runs to 263 residues: MPEGPEIRRAADSLEAAIKGKPLTNAWFAFPQLKSFESSLIGQKVTQIETRGKALLTHFSHNLTLYSHNQLYGVWRVVDAGEHPQTSRILRVRLQTADKAILLYSASDIEMLTPEQLLTHPFLQRVGPDVLDMRLTAEEVKARLLSPKFRNRQFSGLLLDQAFLAGLGNYLRVEILWEVGLAAQRKASQLSEEQLDALSHALLEIPRLSYNTRGVVDDNKHHGALFRFKVFHREGKACERCGGVIERSTLSSRPFYGCPVCQK.

The active-site Schiff-base intermediate with DNA is proline 2. Glutamate 3 serves as the catalytic Proton donor. Lysine 53 functions as the Proton donor; for beta-elimination activity in the catalytic mechanism. Residues glutamine 70, arginine 125, and asparagine 169 each contribute to the DNA site. The FPG-type zinc-finger motif lies at 229 to 263 (KVFHREGKACERCGGVIERSTLSSRPFYGCPVCQK). Arginine 253 acts as the Proton donor; for delta-elimination activity in catalysis.

The protein belongs to the FPG family. Zn(2+) serves as cofactor.

It catalyses the reaction 2'-deoxyribonucleotide-(2'-deoxyribose 5'-phosphate)-2'-deoxyribonucleotide-DNA = a 3'-end 2'-deoxyribonucleotide-(2,3-dehydro-2,3-deoxyribose 5'-phosphate)-DNA + a 5'-end 5'-phospho-2'-deoxyribonucleoside-DNA + H(+). Its function is as follows. Involved in base excision repair of DNA damaged by oxidation or by mutagenic agents. Acts as a DNA glycosylase that recognizes and removes damaged bases. Has a preference for oxidized pyrimidines, such as thymine glycol, 5,6-dihydrouracil and 5,6-dihydrothymine. Has AP (apurinic/apyrimidinic) lyase activity and introduces nicks in the DNA strand. Cleaves the DNA backbone by beta-delta elimination to generate a single-strand break at the site of the removed base with both 3'- and 5'-phosphates. This is Endonuclease 8 from Enterobacter sp. (strain 638).